The chain runs to 157 residues: N-acetylgalactosamine-specific phosphotransferase enzyme IIB component 2 (157 aa).

A PTS EIIB type-4 domain is found at 1–157; it reads MPNIVLSRID…EPAVDLFKLL (157 aa). His-15 (pros-phosphohistidine intermediate) is an active-site residue.

The protein localises to the cytoplasm. In terms of biological role, the phosphoenolpyruvate-dependent sugar phosphotransferase system (sugar PTS), a major carbohydrate active -transport system, catalyzes the phosphorylation of incoming sugar substrates concomitantly with their translocation across the cell membrane. This system is involved in N-acetylgalactosamine transport. The chain is N-acetylgalactosamine-specific phosphotransferase enzyme IIB component 2 (agaV) from Escherichia coli (strain K12).